The following is a 62-amino-acid chain: Insect toxin BsIT4 (62 aa).

Positions 1-62 (DGYIKGNKGC…WLYAATNTCG (62 aa)) constitute an LCN-type CS-alpha/beta domain. Intrachain disulfides connect Cys-10–Cys-61, Cys-14–Cys-35, Cys-21–Cys-42, and Cys-25–Cys-44.

It belongs to the long (4 C-C) scorpion toxin superfamily. Sodium channel inhibitor family. Beta subfamily. As to expression, expressed by the venom gland.

It localises to the secreted. In terms of biological role, depressant insect beta-toxins cause a transient contraction paralysis followed by a slow flaccid paralysis. They bind voltage-independently at site-4 of sodium channels (Nav) and shift the voltage of activation toward more negative potentials thereby affecting sodium channel activation and promoting spontaneous and repetitive firing. This toxin is active only on insects. This Hottentotta tamulus sindicus (Scorpion) protein is Insect toxin BsIT4.